Reading from the N-terminus, the 29-residue chain is Snake venom metalloproteinase bothrolysin (29 aa).

One can recognise a Peptidase M12B domain in the interval 6–29 (RYIELFLVVDSGMFMKYNGNSDKI). Glu9 is a Ca(2+) binding site.

This sequence belongs to the venom metalloproteinase (M12B) family. It depends on Zn(2+) as a cofactor. Expressed by the venom gland.

Its subcellular location is the secreted. The catalysed reaction is Cleavage of 4-Gln-|-His-5, 9-Ser-|-His-10 and 14-Ala-|-Leu-15 of insulin B chain and Pro-|-Phe of angiotensin I.. Snake venom zinc metalloproteinase that impairs hemostasis in the envenomed animal. This chain is Snake venom metalloproteinase bothrolysin, found in Bothrops jararaca (Jararaca).